The chain runs to 500 residues: Protein FAM114A2 (500 aa).

The interval 1–82 (MSNKDDLETA…AAGKETVSKD (82 aa)) is disordered. Serine 93, serine 152, and serine 215 each carry phosphoserine.

The protein belongs to the FAM114 family.

This chain is Protein FAM114A2 (FAM114A1), found in Bos taurus (Bovine).